Consider the following 249-residue polypeptide: Triosephosphate isomerase (249 aa).

9-11 (NWK) is a substrate binding site. His94 functions as the Electrophile in the catalytic mechanism. Glu166 functions as the Proton acceptor in the catalytic mechanism. Residues Gly172, Ser212, and 233 to 234 (GG) contribute to the substrate site.

This sequence belongs to the triosephosphate isomerase family. Homodimer.

The protein resides in the cytoplasm. It carries out the reaction D-glyceraldehyde 3-phosphate = dihydroxyacetone phosphate. It functions in the pathway carbohydrate biosynthesis; gluconeogenesis. The protein operates within carbohydrate degradation; glycolysis; D-glyceraldehyde 3-phosphate from glycerone phosphate: step 1/1. Functionally, involved in the gluconeogenesis. Catalyzes stereospecifically the conversion of dihydroxyacetone phosphate (DHAP) to D-glyceraldehyde-3-phosphate (G3P). In Treponema pallidum (strain Nichols), this protein is Triosephosphate isomerase.